The primary structure comprises 511 residues: Histidine ammonia-lyase (511 aa).

Positions 142 to 144 (ASG) form a cross-link, 5-imidazolinone (Ala-Gly). The residue at position 143 (Ser-143) is a 2,3-didehydroalanine (Ser).

The protein belongs to the PAL/histidase family. Contains an active site 4-methylidene-imidazol-5-one (MIO), which is formed autocatalytically by cyclization and dehydration of residues Ala-Ser-Gly.

It is found in the cytoplasm. It catalyses the reaction L-histidine = trans-urocanate + NH4(+). It functions in the pathway amino-acid degradation; L-histidine degradation into L-glutamate; N-formimidoyl-L-glutamate from L-histidine: step 1/3. In Brucella suis (strain ATCC 23445 / NCTC 10510), this protein is Histidine ammonia-lyase.